Consider the following 55-residue polypeptide: Large ribosomal subunit protein bL33 (55 aa).

This sequence belongs to the bacterial ribosomal protein bL33 family.

This Orientia tsutsugamushi (strain Boryong) (Rickettsia tsutsugamushi) protein is Large ribosomal subunit protein bL33.